The following is a 379-amino-acid chain: Putative acetyl-CoA C-acetyltransferase VraB (379 aa).

The active-site Acyl-thioester intermediate is C86. Residue H338 is the Proton acceptor of the active site.

Belongs to the thiolase-like superfamily. Thiolase family.

The sequence is that of Putative acetyl-CoA C-acetyltransferase VraB (vraB) from Staphylococcus aureus (strain MSSA476).